The primary structure comprises 342 residues: Small ribosomal subunit protein uS2 (342 aa).

A disordered region spans residues 235-283 (EENAPFEQDEPRKPSQKPKQNRPENKPRFDKQAPRAAAKPEVKAEVKPE). A compositionally biased stretch (basic and acidic residues) spans 255–283 (NRPENKPRFDKQAPRAAAKPEVKAEVKPE).

Belongs to the universal ribosomal protein uS2 family.

This is Small ribosomal subunit protein uS2 from Acholeplasma laidlawii (strain PG-8A).